A 281-amino-acid chain; its full sequence is Probable endonuclease 4 (281 aa).

Zn(2+) is bound by residues histidine 67, histidine 107, glutamate 144, aspartate 178, histidine 181, histidine 215, aspartate 228, histidine 230, and glutamate 260.

This sequence belongs to the AP endonuclease 2 family. It depends on Zn(2+) as a cofactor.

It catalyses the reaction Endonucleolytic cleavage to 5'-phosphooligonucleotide end-products.. Functionally, endonuclease IV plays a role in DNA repair. It cleaves phosphodiester bonds at apurinic or apyrimidinic (AP) sites, generating a 3'-hydroxyl group and a 5'-terminal sugar phosphate. This is Probable endonuclease 4 from Methanocorpusculum labreanum (strain ATCC 43576 / DSM 4855 / Z).